We begin with the raw amino-acid sequence, 169 residues long: ATP synthase subunit b, sodium ion specific (169 aa).

Residues 5–27 (SFISLDWGVVFQIVNTIVMYLIL) traverse the membrane as a helical segment.

The protein belongs to the ATPase B chain family. As to quaternary structure, F-type ATPases have 2 components, F(1) - the catalytic core - and F(0) - the membrane proton channel. F(1) has five subunits: alpha(3), beta(3), gamma(1), delta(1), epsilon(1). F(0) has three main subunits: a(1), b(2) and c(10-14). The alpha and beta chains form an alternating ring which encloses part of the gamma chain. F(1) is attached to F(0) by a central stalk formed by the gamma and epsilon chains, while a peripheral stalk is formed by the delta and b chains.

Its subcellular location is the cell membrane. F(1)F(0) ATP synthase produces ATP from ADP in the presence of a proton or sodium gradient. F-type ATPases consist of two structural domains, F(1) containing the extramembraneous catalytic core and F(0) containing the membrane proton channel, linked together by a central stalk and a peripheral stalk. During catalysis, ATP synthesis in the catalytic domain of F(1) is coupled via a rotary mechanism of the central stalk subunits to proton translocation. Its function is as follows. Component of the F(0) channel, it forms part of the peripheral stalk, linking F(1) to F(0). In terms of biological role, in this organism this enzyme may function as an ATP-driven Na(+) ion pump to generate a Na(+) ion electrochemical gradient rather than as an ATP synthase. This is ATP synthase subunit b, sodium ion specific (atpF) from Clostridium paradoxum.